Consider the following 227-residue polypeptide: Inner membrane lipoprotein SadB (227 aa).

A signal peptide spans 1–21; that stretch reads MHKNGKFIPLLALGFTFFLSG. A lipid anchor (N-palmitoyl cysteine) is attached at cysteine 22. Cysteine 22 is lipidated: S-diacylglycerol cysteine. A coiled-coil region spans residues 31-68; that stretch reads VEEMKEQQKEQETKINLLEKQQKEQEAKINLLEKQQAT.

Homotrimer.

Its subcellular location is the cell inner membrane. Functionally, required for proper surface expression of the autotransporter adhesin SadA. Could be directly involved in the biogenesis of functionally active SadA. This chain is Inner membrane lipoprotein SadB, found in Salmonella typhimurium (strain LT2 / SGSC1412 / ATCC 700720).